We begin with the raw amino-acid sequence, 443 residues long: Threonine/serine transporter TdcC (443 aa).

11 consecutive transmembrane segments (helical) span residues 22–42, 44–64, 97–117, 140–160, 163–183, 207–227, 259–279, 319–339, 366–386, 389–409, and 423–443; these read TTWT…FFPI, AGFG…PIAF, GVVI…IYGV, FVAL…KDLM, VMSY…LSLI, ILVT…FSPI, ASML…FTLS, ASII…LGTL, ISMI…PNIL, IEAM…MYAI, and DNVF…YKLF.

This sequence belongs to the amino acid/polyamine transporter 2 family. SdaC/TdcC subfamily.

The protein resides in the cell inner membrane. The catalysed reaction is L-threonine(in) + H(+)(in) = L-threonine(out) + H(+)(out). The enzyme catalyses L-serine(in) + H(+)(in) = L-serine(out) + H(+)(out). In terms of biological role, involved in the import of threonine and serine into the cell, with the concomitant import of a proton (symport system). The polypeptide is Threonine/serine transporter TdcC (Salmonella paratyphi B (strain ATCC BAA-1250 / SPB7)).